The primary structure comprises 1147 residues: Lon protease homolog 2, peroxisomal (1147 aa).

The Lon N-terminal domain occupies 20 to 348 (LPTYKLDSNL…EVNRMLESMI (329 aa)). Disordered regions lie at residues 395–444 (KPDK…DDDD) and 561–626 (KIES…SLTT). A compositionally biased stretch (acidic residues) spans 427–444 (DGNESNDEYDDDEDDDDD). Basic and acidic residues-rich tracts occupy residues 561–574 (KIESENSKKSKKNE) and 582–597 (KNDKQRSEKTFTRSDD). 651 to 658 (GPPGTGKT) lines the ATP pocket. The Lon proteolytic domain maps to 903-1131 (SAKCGVVNGL…WDVIKAVWGD (229 aa)). Catalysis depends on residues Ser-1006 and Lys-1049.

This sequence belongs to the peptidase S16 family.

It localises to the peroxisome matrix. The enzyme catalyses Hydrolysis of proteins in presence of ATP.. ATP-dependent serine protease that mediates the selective degradation of misfolded and unassembled polypeptides in the peroxisomal matrix. Necessary for type 2 peroxisome targeting signal (PTS2)-containing protein processing and facilitates peroxisome matrix protein import. This chain is Lon protease homolog 2, peroxisomal, found in Debaryomyces hansenii (strain ATCC 36239 / CBS 767 / BCRC 21394 / JCM 1990 / NBRC 0083 / IGC 2968) (Yeast).